Here is a 118-residue protein sequence, read N- to C-terminus: Protein TusC (118 aa).

Belongs to the DsrF/TusC family. In terms of assembly, heterohexamer, formed by a dimer of trimers. The hexameric TusBCD complex contains 2 copies each of TusB, TusC and TusD. The TusBCD complex interacts with TusE.

The protein resides in the cytoplasm. Its function is as follows. Part of a sulfur-relay system required for 2-thiolation of 5-methylaminomethyl-2-thiouridine (mnm(5)s(2)U) at tRNA wobble positions. The chain is Protein TusC from Salmonella typhimurium (strain LT2 / SGSC1412 / ATCC 700720).